Reading from the N-terminus, the 94-residue chain is uncharacterized protein (94 aa).

This is an uncharacterized protein from Saccharolobus islandicus (Sulfolobus islandicus).